The primary structure comprises 126 residues: MNIALLKSKIHRASVTEARLDYVGSISIDEKLLQASGILEYEKVQVVNINNGARFETYTIATQEEGVVCLNGATARLAEVGDKVIIMSYADFNEEEAKTFKPKVVFVDENNTATKITNYEKHGSIF.

The Schiff-base intermediate with substrate; via pyruvic acid role is filled by Ser25. A Pyruvic acid (Ser) modification is found at Ser25. Thr57 is a substrate binding site. Tyr58 acts as the Proton donor in catalysis. Residue 72 to 74 (GAT) participates in substrate binding.

It belongs to the PanD family. In terms of assembly, heterooctamer of four alpha and four beta subunits. It depends on pyruvate as a cofactor. Post-translationally, is synthesized initially as an inactive proenzyme, which is activated by self-cleavage at a specific serine bond to produce a beta-subunit with a hydroxyl group at its C-terminus and an alpha-subunit with a pyruvoyl group at its N-terminus.

The protein localises to the cytoplasm. It catalyses the reaction L-aspartate + H(+) = beta-alanine + CO2. It functions in the pathway cofactor biosynthesis; (R)-pantothenate biosynthesis; beta-alanine from L-aspartate: step 1/1. Its function is as follows. Catalyzes the pyruvoyl-dependent decarboxylation of aspartate to produce beta-alanine. The chain is Aspartate 1-decarboxylase from Campylobacter jejuni subsp. doylei (strain ATCC BAA-1458 / RM4099 / 269.97).